The following is a 343-amino-acid chain: D-erythrose-4-phosphate dehydrogenase (343 aa).

12–13 (RI) contacts NAD(+). Substrate is bound by residues 154 to 156 (SCT), Arg-200, 213 to 214 (TK), and Arg-236. The active-site Nucleophile is the Cys-155. Asn-318 is an NAD(+) binding site.

This sequence belongs to the glyceraldehyde-3-phosphate dehydrogenase family. Epd subfamily. In terms of assembly, homotetramer.

The protein resides in the cytoplasm. The catalysed reaction is D-erythrose 4-phosphate + NAD(+) + H2O = 4-phospho-D-erythronate + NADH + 2 H(+). It participates in cofactor biosynthesis; pyridoxine 5'-phosphate biosynthesis; pyridoxine 5'-phosphate from D-erythrose 4-phosphate: step 1/5. In terms of biological role, catalyzes the NAD-dependent conversion of D-erythrose 4-phosphate to 4-phosphoerythronate. The polypeptide is D-erythrose-4-phosphate dehydrogenase (Pseudoalteromonas translucida (strain TAC 125)).